A 274-amino-acid polypeptide reads, in one-letter code: NH(3)-dependent NAD(+) synthetase (274 aa).

Residue 46–53 (GISGGQDS) coordinates ATP. Asp52 is a binding site for Mg(2+). Arg140 is a deamido-NAD(+) binding site. Thr160 contributes to the ATP binding site. Glu165 provides a ligand contact to Mg(2+). Residues Lys173 and Asp180 each coordinate deamido-NAD(+). Residues Lys189 and Thr211 each coordinate ATP. 260–261 (HK) lines the deamido-NAD(+) pocket.

The protein belongs to the NAD synthetase family. Homodimer.

The enzyme catalyses deamido-NAD(+) + NH4(+) + ATP = AMP + diphosphate + NAD(+) + H(+). The protein operates within cofactor biosynthesis; NAD(+) biosynthesis; NAD(+) from deamido-NAD(+) (ammonia route): step 1/1. Its function is as follows. Catalyzes the ATP-dependent amidation of deamido-NAD to form NAD. Uses ammonia as a nitrogen source. This Lactococcus lactis subsp. cremoris (strain MG1363) protein is NH(3)-dependent NAD(+) synthetase.